We begin with the raw amino-acid sequence, 131 residues long: Large-conductance mechanosensitive channel (131 aa).

The next 3 helical transmembrane spans lie at 8-28 (FAVR…GAFG), 30-50 (IVSS…LGGI), and 67-87 (GAFL…FLFV).

This sequence belongs to the MscL family. As to quaternary structure, homopentamer.

It localises to the cell membrane. In terms of biological role, channel that opens in response to stretch forces in the membrane lipid bilayer. May participate in the regulation of osmotic pressure changes within the cell. The chain is Large-conductance mechanosensitive channel from Anoxybacillus flavithermus (strain DSM 21510 / WK1).